A 169-amino-acid polypeptide reads, in one-letter code: Gamma-crystallin 2 (169 aa).

Beta/gamma crystallin 'Greek key' domains lie at 1–34 (YEDR…KVDS) and 35–77 (GCWM…KVIP). The tract at residues 78–82 (QQKGP) is connecting peptide. Beta/gamma crystallin 'Greek key' domains are found at residues 83-123 (HKMK…NVLE) and 124-166 (GHWI…RRVL).

The protein belongs to the beta/gamma-crystallin family. In terms of assembly, monomer.

Crystallins are the dominant structural components of the vertebrate eye lens. The chain is Gamma-crystallin 2 from Rana temporaria (European common frog).